A 367-amino-acid polypeptide reads, in one-letter code: Splicing factor U2AF-associated protein 2 (367 aa).

The interval Tyr-36 to Pro-104 is disordered. Positions Thr-61–Tyr-78 are enriched in basic and acidic residues. RRM domains are found at residues Val-112–Val-193 and Leu-268–Ala-329.

It belongs to the HTATSF1 family. As to quaternary structure, interacts with the U2AF large and U2AF small subunits.

In terms of biological role, has a role in pre-mRNA splicing. In Schizosaccharomyces pombe (strain 972 / ATCC 24843) (Fission yeast), this protein is Splicing factor U2AF-associated protein 2 (uap2).